We begin with the raw amino-acid sequence, 831 residues long: DNA ligase (831 aa).

NAD(+)-binding positions include 34 to 38 (DADYD), 83 to 84 (SL), and glutamate 114. Lysine 116 functions as the N6-AMP-lysine intermediate in the catalytic mechanism. The NAD(+) site is built by arginine 137, glutamate 174, lysine 291, and lysine 315. The Zn(2+) site is built by cysteine 409, cysteine 412, cysteine 427, and cysteine 433. The BRCT domain maps to 749 to 831 (AHTAPLNGQS…LAFLGQYSAQ (83 aa)).

The protein belongs to the NAD-dependent DNA ligase family. LigA subfamily. Requires Mg(2+) as cofactor. Mn(2+) is required as a cofactor.

The catalysed reaction is NAD(+) + (deoxyribonucleotide)n-3'-hydroxyl + 5'-phospho-(deoxyribonucleotide)m = (deoxyribonucleotide)n+m + AMP + beta-nicotinamide D-nucleotide.. Its function is as follows. DNA ligase that catalyzes the formation of phosphodiester linkages between 5'-phosphoryl and 3'-hydroxyl groups in double-stranded DNA using NAD as a coenzyme and as the energy source for the reaction. It is essential for DNA replication and repair of damaged DNA. This is DNA ligase from Xylella fastidiosa (strain 9a5c).